Reading from the N-terminus, the 309-residue chain is Olfactory receptor 7A17 (309 aa).

Over 1 to 25 the chain is Extracellular; it reads MEPENDTGISEFVLLGLSEEPELQP. An N-linked (GlcNAc...) asparagine glycan is attached at asparagine 5. Residues 26–46 traverse the membrane as a helical segment; that stretch reads FLFGLFLSMYLVTVLGNLLII. The Cytoplasmic portion of the chain corresponds to 47 to 54; the sequence is LATISDSH. A helical membrane pass occupies residues 55–75; it reads LHTPMYFFLSNLSFADICFIS. The Extracellular portion of the chain corresponds to 76–99; sequence TTIPKMLINIQTQSRVITYAGCIT. Residues cysteine 97 and cysteine 189 are joined by a disulfide bond. The chain crosses the membrane as a helical span at residues 100 to 120; it reads QMCFFVLFGGLDSLLLAVMAY. Residues 121–139 lie on the Cytoplasmic side of the membrane; that stretch reads DRFVAICHPLHYTVIMNPR. Residues 140-160 form a helical membrane-spanning segment; it reads LCGLLVLASWMIAALNSLSQS. Over 161–197 the chain is Extracellular; the sequence is LMVLWLSFCTDLEIPHFFCELNQVIHLACSDTFLNDM. A helical membrane pass occupies residues 198–217; it reads GMYFAAGLLAGGPLVGILCS. Topologically, residues 218–237 are cytoplasmic; that stretch reads YSKIVSSIRAISSAQGKYKA. Residues 238–258 traverse the membrane as a helical segment; the sequence is FSTCASHLSVVSLFCCTGLGV. Residues 259–271 are Extracellular-facing; it reads YLTSAATHNSHTS. The helical transmembrane segment at 272–292 threads the bilayer; that stretch reads ATASVMYTVATPMLNPFIYSL. Topologically, residues 293 to 309 are cytoplasmic; sequence RNKDIKRALKMSFRGKQ.

This sequence belongs to the G-protein coupled receptor 1 family.

It localises to the cell membrane. Functionally, odorant receptor. The sequence is that of Olfactory receptor 7A17 (OR7A17) from Homo sapiens (Human).